Reading from the N-terminus, the 853-residue chain is MRVKEKYQHLWRWGWKWGIMLLGILMICSATENLWVTVYYGVPVWKEATTTLFCASDAKAYDTEVHNVCATHACVPTDPNPQEVILVNVTENFDMWKNDMVEQMHEDIISLWDQSLKPCVKLTPLCVNLKCTDLKNDTNTNSSNGRMIMEKGEIKNCSFNISTSIRNKVQKEYAFFYKLDIRPIDNTTYRLISCNTSVITQACPKVSFEPIPIHYCAPAGFAILKCNDKTFNGTGPCTNVSTVQCTHGIRPVVSTQLLLNGSLAEEEGVIRSANFTDNAKTIIVQLNTSVEINCTRPNNNTRKSIRIQRGPGRAFVTIGKIGNMRQAHCNISRAKWMSTLKQIASKLREQFGNNKTVIFKQSSGGDPEIVTHSFNCGGEFFYCNSTQLFNSTWFNSTWSTEGSNNTEGSDTITLPCRIKQFINMWQEVGKAMYAPPISGQIRCSSNITGLLLTRDGGKNTNESEVFRPGGGDMRDNWRSELYKYKVVKIETLGVAPTKAKRRVVQREKRAVGIGALFLGFLGAAGSTMGAASMTLTVQARQLLSGIVQQQNNLLRAIEAQQHLLQLTVWGIKQLQARILAVERYLKDQQLLGIWGCSGKLICTTAVPWNASWSNKSLEQFWNNMTWMEWDREINNYTSLIHSLIDESQNQQEKNEQELLELDKWASLWNWFNITNWLWYIKIFIMIVGGLVGLRIVFAVLSIVNRVRQGYSPLSFQTHLPNRGGPDRPEGIEEEGGERDRDRSVRLVNGSLALIWDDLRSLCLFSYHRLRDLLLIVTRIVELLGRRGWEALKYWWNLLQYWSQELKNSAVSLLNATAIAVAEGTDRVIEVVQGAYRAIRHIPRRIRQGLERIL.

The first 32 residues, 1-32 (MRVKEKYQHLWRWGWKWGIMLLGILMICSATE), serve as a signal peptide directing secretion. The Extracellular portion of the chain corresponds to 33–682 (NLWVTVYYGV…ITNWLWYIKI (650 aa)). An intrachain disulfide couples Cys54 to Cys74. N-linked (GlcNAc...) asparagine; by host glycosylation is found at Asn88, Asn136, Asn141, Asn156, Asn160, Asn186, Asn195, Asn232, Asn239, Asn260, Asn274, Asn287, Asn293, Asn299, Asn330, and Asn354. 5 disulfide bridges follow: Cys119-Cys203, Cys126-Cys194, Cys131-Cys157, Cys216-Cys245, and Cys226-Cys237. Residues 131-156 (CTDLKNDTNTNSSNGRMIMEKGEIKN) are V1. The interval 157 to 194 (CSFNISTSIRNKVQKEYAFFYKLDIRPIDNTTYRLISC) is V2. The interval 294 to 328 (CTRPNNNTRKSIRIQRGPGRAFVTIGKIGNMRQAH) is V3. Cysteines 294 and 329 form a disulfide. The interval 362–372 (SSGGDPEIVTH) is CD4-binding loop. Cystine bridges form between Cys376/Cys443 and Cys383/Cys416. The segment at 383-416 (CNSTQLFNSTWFNSTWSTEGSNNTEGSDTITLPC) is V4. Asn384, Asn390, Asn395, Asn404, Asn446, and Asn461 each carry an N-linked (GlcNAc...) asparagine; by host glycan. 2 V5 regions span residues 459-469 (NTNESEVFRPG) and 461-469 (NESEVFRPG). Positions 510 to 530 (AVGIGALFLGFLGAAGSTMGA) are fusion peptide. Residues 572–590 (KQLQARILAVERYLKDQQL) form an immunosuppression region. Cysteines 596 and 602 form a disulfide. 5 N-linked (GlcNAc...) asparagine; by host glycosylation sites follow: Asn609, Asn614, Asn623, Asn635, and Asn672. Positions 631–665 (REINNYTSLIHSLIDESQNQQEKNEQELLELDKWA) form a coiled coil. The segment at 660–681 (ELDKWASLWNWFNITNWLWYIK) is MPER; binding to GalCer. The chain crosses the membrane as a helical span at residues 683 to 703 (FIMIVGGLVGLRIVFAVLSIV). The Cytoplasmic segment spans residues 704-853 (NRVRQGYSPL…RIRQGLERIL (150 aa)). The YXXL motif; contains endocytosis signal motif lies at 710–713 (YSPL). The tract at residues 717 to 741 (THLPNRGGPDRPEGIEEEGGERDRD) is disordered. Cys762 is lipidated: S-palmitoyl cysteine; by host.

This sequence belongs to the HIV-1 env protein family. The mature envelope protein (Env) consists of a homotrimer of non-covalently associated gp120-gp41 heterodimers. The resulting complex protrudes from the virus surface as a spike. There seems to be as few as 10 spikes on the average virion. Interacts with host CD4, CCR5 and CXCR4. Gp120 also interacts with the C-type lectins CD209/DC-SIGN and CLEC4M/DC-SIGNR (collectively referred to as DC-SIGN(R)). Gp120 and gp41 interact with GalCer. Gp120 interacts with host ITGA4/ITGB7 complex; on CD4+ T-cells, this interaction results in rapid activation of integrin ITGAL/LFA-1, which facilitates efficient cell-to-cell spreading of HIV-1. Gp120 interacts with cell-associated heparan sulfate; this interaction increases virus infectivity on permissive cells and may be involved in infection of CD4- cells. As to quaternary structure, the mature envelope protein (Env) consists of a homotrimer of non-covalently associated gp120-gp41 heterodimers. The resulting complex protrudes from the virus surface as a spike. There seems to be as few as 10 spikes on the average virion. Highly glycosylated by host. The high number of glycan on the protein is reffered to as 'glycan shield' because it contributes to hide protein sequence from adaptive immune system. In terms of processing, palmitoylation of the transmembrane protein and of Env polyprotein (prior to its proteolytic cleavage) is essential for their association with host cell membrane lipid rafts. Palmitoylation is therefore required for envelope trafficking to classical lipid rafts, but not for viral replication. Post-translationally, specific enzymatic cleavages in vivo yield mature proteins. Envelope glycoproteins are synthesized as an inactive precursor that is heavily N-glycosylated and processed likely by host cell furin in the Golgi to yield the mature SU and TM proteins. The cleavage site between SU and TM requires the minimal sequence [KR]-X-[KR]-R. About 2 of the 9 disulfide bonds of gp41 are reduced by P4HB/PDI, following binding to CD4 receptor.

The protein resides in the virion membrane. It localises to the host cell membrane. Its subcellular location is the host endosome membrane. Its function is as follows. Oligomerizes in the host endoplasmic reticulum into predominantly trimers. In a second time, gp160 transits in the host Golgi, where glycosylation is completed. The precursor is then proteolytically cleaved in the trans-Golgi and thereby activated by cellular furin or furin-like proteases to produce gp120 and gp41. Functionally, attaches the virus to the host lymphoid cell by binding to the primary receptor CD4. This interaction induces a structural rearrangement creating a high affinity binding site for a chemokine coreceptor like CXCR4 and/or CCR5. Acts as a ligand for CD209/DC-SIGN and CLEC4M/DC-SIGNR, which are respectively found on dendritic cells (DCs), and on endothelial cells of liver sinusoids and lymph node sinuses. These interactions allow capture of viral particles at mucosal surfaces by these cells and subsequent transmission to permissive cells. HIV subverts the migration properties of dendritic cells to gain access to CD4+ T-cells in lymph nodes. Virus transmission to permissive T-cells occurs either in trans (without DCs infection, through viral capture and transmission), or in cis (following DCs productive infection, through the usual CD4-gp120 interaction), thereby inducing a robust infection. In trans infection, bound virions remain infectious over days and it is proposed that they are not degraded, but protected in non-lysosomal acidic organelles within the DCs close to the cell membrane thus contributing to the viral infectious potential during DCs' migration from the periphery to the lymphoid tissues. On arrival at lymphoid tissues, intact virions recycle back to DCs' cell surface allowing virus transmission to CD4+ T-cells. In terms of biological role, acts as a class I viral fusion protein. Under the current model, the protein has at least 3 conformational states: pre-fusion native state, pre-hairpin intermediate state, and post-fusion hairpin state. During fusion of viral and target intracellular membranes, the coiled coil regions (heptad repeats) assume a trimer-of-hairpins structure, positioning the fusion peptide in close proximity to the C-terminal region of the ectodomain. The formation of this structure appears to drive apposition and subsequent fusion of viral and target cell membranes. Complete fusion occurs in host cell endosomes and is dynamin-dependent, however some lipid transfer might occur at the plasma membrane. The virus undergoes clathrin-dependent internalization long before endosomal fusion, thus minimizing the surface exposure of conserved viral epitopes during fusion and reducing the efficacy of inhibitors targeting these epitopes. Membranes fusion leads to delivery of the nucleocapsid into the cytoplasm. This is Envelope glycoprotein gp160 from Human immunodeficiency virus type 1 group M subtype B (isolate MFA) (HIV-1).